Reading from the N-terminus, the 464-residue chain is uncharacterized protein (464 aa).

2 disordered regions span residues 290 to 374 (YRKQ…ERPK) and 445 to 464 (ETDD…PLEE). Over residues 293–302 (QQQWQQQQQQ) the composition is skewed to low complexity. Over residues 303–318 (RKVKTPIKKQEAKKKA) the composition is skewed to basic residues. The span at 352 to 367 (DMKQQQQMEKGTTSKQ) shows a compositional bias: polar residues. A compositionally biased stretch (acidic residues) spans 445–454 (ETDDEDEENQ).

This is an uncharacterized protein from Macaca fascicularis (Crab-eating macaque).